The sequence spans 234 residues: Proteasome subunit alpha type-2 (234 aa).

At alanine 2 the chain carries N-acetylalanine. Tyrosine 121 carries the phosphotyrosine modification.

It belongs to the peptidase T1A family. In terms of assembly, the 26S proteasome consists of a 20S proteasome core and two 19S regulatory subunits. The 20S proteasome core is a barrel-shaped complex made of 28 subunits that are arranged in four stacked rings. The two outer rings are each formed by seven alpha subunits, and the two inner rings are formed by seven beta subunits. The proteolytic activity is exerted by three beta-subunits PSMB5, PSMB6 and PSMB7.

The protein localises to the cytoplasm. Its subcellular location is the nucleus. Functionally, component of the 20S core proteasome complex involved in the proteolytic degradation of most intracellular proteins. This complex plays numerous essential roles within the cell by associating with different regulatory particles. Associated with two 19S regulatory particles, forms the 26S proteasome and thus participates in the ATP-dependent degradation of ubiquitinated proteins. The 26S proteasome plays a key role in the maintenance of protein homeostasis by removing misfolded or damaged proteins that could impair cellular functions, and by removing proteins whose functions are no longer required. Associated with the PA200 or PA28, the 20S proteasome mediates ubiquitin-independent protein degradation. This type of proteolysis is required in several pathways including spermatogenesis (20S-PA200 complex) or generation of a subset of MHC class I-presented antigenic peptides (20S-PA28 complex). In Xenopus laevis (African clawed frog), this protein is Proteasome subunit alpha type-2 (psma2).